Consider the following 1020-residue polypeptide: Tetrathionate reductase subunit A (1020 aa).

Positions 1–33 (MANLTRRQWLKVGLAVGGMVTFGLSYRDVAKRA) form a signal peptide, tat-type signal. The 84-residue stretch at 71 to 154 (QTIAMTQCFG…TLLESLYSPL (84 aa)) folds into the 4Fe-4S Mo/W bis-MGD-type domain. The [4Fe-4S] cluster site is built by Cys-78, Cys-81, Cys-85, and Cys-140.

This sequence belongs to the prokaryotic molybdopterin-containing oxidoreductase family. As to quaternary structure, probably composed of three subunits: TtrA, TtrB and TtrC. It depends on [4Fe-4S] cluster as a cofactor. Mo-bis(molybdopterin guanine dinucleotide) is required as a cofactor. In terms of processing, predicted to be exported by the Tat system. The position of the signal peptide cleavage has not been experimentally proven.

The protein localises to the periplasm. Its subcellular location is the cell inner membrane. In terms of biological role, part of a membrane-bound tetrathionate reductase that catalyzes the reduction of tetrathionate to thiosulfate. TtrA is the catalytic subunit. During mice infection, the ability to use tetrathionate as an electron acceptor is a growth advantage for S.typhimurium over the competing microbiota in the lumen of the inflamed gut. This chain is Tetrathionate reductase subunit A (ttrA), found in Salmonella typhimurium (strain LT2 / SGSC1412 / ATCC 700720).